The primary structure comprises 326 residues: ELMO domain-containing protein 1 (326 aa).

Residues 133 to 306 form the ELMO domain; it reads QHEEMLLKLW…KFRKRIIKQL (174 aa).

In terms of biological role, acts as a GTPase-activating protein (GAP) toward guanine nucleotide exchange factors like ARL2, ARL3, ARF1 and ARF6, but not for GTPases outside the Arf family. The chain is ELMO domain-containing protein 1 (ELMOD1) from Bos taurus (Bovine).